The sequence spans 455 residues: Kynurenine 3-monooxygenase (455 aa).

Belongs to the aromatic-ring hydroxylase family. KMO subfamily. Requires FAD as cofactor.

It catalyses the reaction L-kynurenine + NADPH + O2 + H(+) = 3-hydroxy-L-kynurenine + NADP(+) + H2O. It functions in the pathway cofactor biosynthesis; NAD(+) biosynthesis; quinolinate from L-kynurenine: step 1/3. Functionally, catalyzes the hydroxylation of L-kynurenine (L-Kyn) to form 3-hydroxy-L-kynurenine (L-3OHKyn). Required for synthesis of quinolinic acid. In Xanthomonas oryzae pv. oryzae (strain PXO99A), this protein is Kynurenine 3-monooxygenase.